Here is a 523-residue protein sequence, read N- to C-terminus: Ubiquitin carboxyl-terminal hydrolase 22-B (523 aa).

A UBP-type zinc finger spans residues 4–121 (AGCSHVNSFK…KEEQRKAWKL (118 aa)). Residues cysteine 6, histidine 8, cysteine 46, cysteine 49, cysteine 59, cysteine 62, cysteine 67, histidine 72, histidine 76, histidine 82, cysteine 95, and cysteine 98 each contribute to the Zn(2+) site. The region spanning 174-518 (RGLINLGNTC…EGYLLFYHKQ (345 aa)) is the USP domain. Cysteine 183 functions as the Nucleophile in the catalytic mechanism. The Proton acceptor role is filled by histidine 477.

Belongs to the peptidase C19 family. UBP8 subfamily. In terms of assembly, component of some SAGA transcription coactivator-HAT complexes.

The protein localises to the nucleus. The enzyme catalyses Thiol-dependent hydrolysis of ester, thioester, amide, peptide and isopeptide bonds formed by the C-terminal Gly of ubiquitin (a 76-residue protein attached to proteins as an intracellular targeting signal).. Histone deubiquitinating component of the transcription regulatory histone acetylation (HAT) complex SAGA. Catalyzes the deubiquitination of both histones H2A and H2B, thereby acting as a coactivator. Recruited to specific gene promoters by activators, where it is required for transcription. The polypeptide is Ubiquitin carboxyl-terminal hydrolase 22-B (usp22-b) (Xenopus laevis (African clawed frog)).